The following is a 348-amino-acid chain: Protein RecA (348 aa).

65–72 (GPESSGKT) is an ATP binding site.

The protein belongs to the RecA family.

It localises to the cytoplasm. Functionally, can catalyze the hydrolysis of ATP in the presence of single-stranded DNA, the ATP-dependent uptake of single-stranded DNA by duplex DNA, and the ATP-dependent hybridization of homologous single-stranded DNAs. It interacts with LexA causing its activation and leading to its autocatalytic cleavage. This Vibrio anguillarum (strain ATCC 68554 / 775) (Listonella anguillarum) protein is Protein RecA.